The primary structure comprises 791 residues: Ataxin-2 homolog (791 aa).

A compositionally biased stretch (polar residues) spans 1–22 (MATRSVSMKQTSQRAASPNKTQ). Disordered stretches follow at residues 1-28 (MATRSVSMKQTSQRAASPNKTQGAKKWS), 60-100 (RGGV…QQRV), 112-134 (RTETRQRELRRWMPDPEDAGVPL), 235-311 (TRSN…KEGQ), 326-423 (SLDS…TKLG), 452-505 (KPAP…PVSS), 613-634 (NPSQHTSVAPSPNGTPTSGNSS), and 707-791 (PMYG…EAKP). Residues 76 to 96 (SLASSEENVSSVSGSAKSNNS) show a composition bias toward low complexity. 2 stretches are compositionally biased toward basic and acidic residues: residues 112–125 (RTETRQRELRRWMP) and 243–256 (NNKDQKPKNHEAPH). Positions 326-337 (SLDSKQPSSTKS) are enriched in polar residues. Basic and acidic residues-rich tracts occupy residues 360–371 (DSKEPRKEEAEK) and 395–418 (SKEEEKPSTEPEKPSVVTQRKETT). The segment covering 473–486 (SIPSTTPQSPSVVS) has biased composition (low complexity). Residues 487–497 (NGENKPSSSPV) are compositionally biased toward polar residues. Composition is skewed to low complexity over residues 715-725 (SNSQRSFNSSN) and 734-760 (NNNASNTFSHSNASTSSSLNAAPNTTA). Over residues 774–791 (DATEKTEKDASANQEAKP) the composition is skewed to basic and acidic residues.

It belongs to the ataxin-2 family. As to quaternary structure, interacts with mkt1.

Its subcellular location is the cytoplasm. Its function is as follows. Involved in post-transcriptional regulation of gene expression, probably by association with mkt1. The chain is Ataxin-2 homolog from Schizosaccharomyces pombe (strain 972 / ATCC 24843) (Fission yeast).